A 690-amino-acid polypeptide reads, in one-letter code: SWI/SNF-related matrix-associated actin-dependent regulator of chromatin subfamily A-like protein 1 homolog (690 aa).

The tract at residues 30–49 (MQAAANATASTSSAAPPAPP) is disordered. Low complexity predominate over residues 31 to 44 (QAAANATASTSSAA). The 79-residue stretch at 92–170 (PTSLIKPTIG…AVKVELEPLP (79 aa)) folds into the HARP domain. The Helicase ATP-binding domain occupies 209-367 (IFALERDGRI…FTQIRLIDHK (159 aa)). 222–229 (DEMGLGKS) lines the ATP pocket. Positions 316–319 (DESH) match the DESH box motif. A Nuclear localization signal motif is present at residues 411–428 (RRLKADVLKDLPEKRREV). A Helicase C-terminal domain is found at 482-639 (ILENYFYPDA…TFRTADKMHL (158 aa)).

The protein belongs to the SNF2/RAD54 helicase family. SMARCAL1 subfamily.

It localises to the nucleus. It carries out the reaction ATP + H2O = ADP + phosphate + H(+). In terms of biological role, ATP-dependent annealing helicase that catalyzes the rewinding of the stably unwound DNA. The chain is SWI/SNF-related matrix-associated actin-dependent regulator of chromatin subfamily A-like protein 1 homolog from Caenorhabditis elegans.